The following is a 405-amino-acid chain: METPKHIRGVWRRDSVLKHREKKFNYSFWNCSVHEHFISITNNREIHILPDDLLLPRCPSIRAILFKQIPSFKFSGSRSGPPGTVTSLYVYGHSKNLIKIKPMVVSECEQELIFKITFALECTIPPGSMEIFILPITFLKLDGLYLLCLEDYTSRIMSTSCMQMGTYLASETPQVFLKGGPVLNKHEPMPYLMAQKTKPFDKKMARVHTVQNEVCEVNSIYRGENHVKVAIQKDSEDINFLDTVVVGLTMTNRALVAFEYNPYFSCPWDWKRQSIPIIYDGPCIRIPAGRLAPVKYNNTYSSIYPNATAIITNSDSCADFHISDCEWKPGKTACIVVTNTSTISVTISSGTHLGEAVFILAPKFFCRKIMSKTHVQKLSSAICLPGNVTINSNKVPKLADLSTYK.

This is an uncharacterized protein from Saimiri sciureus (Common squirrel monkey).